The chain runs to 1275 residues: Myosin-1 (1275 aa).

A Myosin motor domain is found at 35 to 727 (VGVSDLTLLS…TLFAMEDMRD (693 aa)). 128-135 (GESGAGKT) is an ATP binding site. Ser361 carries the phosphoserine modification. The actin-binding stretch occupies residues 410–493 (TIGILDIYGF…PGLFAALNDS (84 aa)). IQ domains follow at residues 731 to 751 (HNMAARIQRAWRRYVKRKEDA) and 752 to 777 (ARLIQNAWKVKKHGNQFEQLRDYGNG). A TH1 domain is found at 785 to 974 (RRRMSMLGSR…KSGTVSVRPG (190 aa)). Disordered regions lie at residues 966-1064 (SGTV…LNNN), 1089-1128 (QNHNSNPTAPSRPAKKAAPAPPVKKTAPPPPPSLSAAKPK), 1183-1230 (SECP…GGLS), and 1251-1275 (IADALKKRSATRDSDDEEEDDDDDW). The segment covering 977 to 992 (PDSQNPKRPRATSSKV) has biased composition (polar residues). Residues 1095 to 1106 (PTAPSRPAKKAA) show a composition bias toward low complexity. Residues 1107-1121 (PAPPVKKTAPPPPPS) are compositionally biased toward pro residues. Residues 1127 to 1187 (PKWPTFKANY…PTAYISECPP (61 aa)) form the SH3 domain. The segment covering 1254–1263 (ALKKRSATRD) has biased composition (basic and acidic residues). A compositionally biased stretch (acidic residues) spans 1264 to 1275 (SDDEEEDDDDDW).

It belongs to the TRAFAC class myosin-kinesin ATPase superfamily. Myosin family. In terms of processing, phosphorylation of the TEDS site (Ser-361) is required for the polarization of the actin cytoskeleton. Phosphorylation probably activates the myosin-I ATPase activity.

The protein localises to the cytoplasm. Its subcellular location is the cytoskeleton. The protein resides in the actin patch. Type-I myosin implicated in the organization of the actin cytoskeleton. Required for proper actin cytoskeleton polarization. At the cell cortex, assembles in patch-like structures together with proteins from the actin-polymerizing machinery and promotes actin assembly. Functions as actin nucleation-promoting factor (NPF) for the Arp2/3 complex. The chain is Myosin-1 (MYO1) from Meyerozyma guilliermondii (strain ATCC 6260 / CBS 566 / DSM 6381 / JCM 1539 / NBRC 10279 / NRRL Y-324) (Yeast).